Here is a 142-residue protein sequence, read N- to C-terminus: Hemoglobin subunit alpha (142 aa).

Residues 2–142 (VLSAADKSNV…VGTVLTSKYR (141 aa)) enclose the Globin domain. Ser-4 is modified (phosphoserine). N6-succinyllysine occurs at positions 8 and 12. Lys-17 is subject to N6-acetyllysine; alternate. Lys-17 bears the N6-succinyllysine; alternate mark. The residue at position 25 (Tyr-25) is a Phosphotyrosine. Phosphoserine is present on Ser-36. N6-succinyllysine is present on Lys-41. Ser-50 bears the Phosphoserine mark. His-59 serves as a coordination point for O2. His-88 contributes to the heme b binding site. At Ser-103 the chain carries Phosphoserine. Residue Thr-109 is modified to Phosphothreonine. Residues Ser-125 and Ser-132 each carry the phosphoserine modification. Phosphothreonine occurs at positions 135 and 138. Position 139 is a phosphoserine (Ser-139).

It belongs to the globin family. Heterotetramer of two alpha chains and two beta chains. As to expression, red blood cells.

Functionally, involved in oxygen transport from the lung to the various peripheral tissues. Its function is as follows. Hemopressin acts as an antagonist peptide of the cannabinoid receptor CNR1. Hemopressin-binding efficiently blocks cannabinoid receptor CNR1 and subsequent signaling. The sequence is that of Hemoglobin subunit alpha (HBA) from Pantholops hodgsonii (Chiru).